The chain runs to 245 residues: 1-(5-phosphoribosyl)-5-[(5-phosphoribosylamino)methylideneamino] imidazole-4-carboxamide isomerase (245 aa).

Asp8 serves as the catalytic Proton acceptor. The active-site Proton donor is the Asp130.

The protein belongs to the HisA/HisF family.

It is found in the cytoplasm. It catalyses the reaction 1-(5-phospho-beta-D-ribosyl)-5-[(5-phospho-beta-D-ribosylamino)methylideneamino]imidazole-4-carboxamide = 5-[(5-phospho-1-deoxy-D-ribulos-1-ylimino)methylamino]-1-(5-phospho-beta-D-ribosyl)imidazole-4-carboxamide. It functions in the pathway amino-acid biosynthesis; L-histidine biosynthesis; L-histidine from 5-phospho-alpha-D-ribose 1-diphosphate: step 4/9. The protein is 1-(5-phosphoribosyl)-5-[(5-phosphoribosylamino)methylideneamino] imidazole-4-carboxamide isomerase of Pseudomonas fluorescens (strain Pf0-1).